An 85-amino-acid polypeptide reads, in one-letter code: Contulakin-Lt1 (85 aa).

Residues 1–22 (MRTAYWVMVMMMVGITAPLSEG) form the signal peptide. A propeptide spanning residues 23-60 (RKLNDAIRGLVADYLTPQLLQSLVSAPYPEFQLDDPNL) is cleaved from the precursor. A disulfide bridge links Cys65 with Cys70. Residues 76-85 (RRRDLKKRNK) constitute a propeptide that is removed on maturation.

The protein belongs to the conotoxin C superfamily. In terms of tissue distribution, expressed by the venom duct.

The protein resides in the secreted. In terms of biological role, acts as an agonist of neurotensin receptors. It binds to human neurotensin type 1 receptor (NTSR1), rat neurotensin types 1 and 2 receptors (NTSR1/NTSR2) and mouse neurotensin type 3 receptor (SORT1). The polypeptide is Contulakin-Lt1 (Conus litteratus (Lettered cone)).